Consider the following 254-residue polypeptide: PAXIP1-associated glutamate-rich protein 1 (254 aa).

Disordered stretches follow at residues 1–111 (MSLA…PPSE) and 127–254 (LQAE…QRKY). A compositionally biased stretch (basic and acidic residues) spans 45–62 (KAEDEGEGGREETEREGS). Over residues 78 to 98 (EPAEEDSEDWCVPCSDEEVEL) the composition is skewed to acidic residues. Residues 116 to 160 (YELLAAHGTLELQAEILPRRPPTPEAQSEEERSDEEPEAKEEEEE) are sufficient for interaction with NCOA1. Residue Thr138 is modified to Phosphothreonine. Residues 142-159 (QSEEERSDEEPEAKEEEE) are compositionally biased toward acidic residues. Phosphoserine occurs at positions 143 and 148. A sufficient for interaction with ESR1 region spans residues 161–254 (KPHMPTEFDF…SSLFPRQRKY (94 aa)). Residues 195–223 (QKREARLDKVLSDMKRHKKLEEQILRTGR) show a composition bias toward basic and acidic residues. Residue Ser237 is modified to Phosphoserine.

In terms of assembly, component of the KMT2 family MLL2/MLL3 complex (also named ASCOM complex), at least composed of the HMTs KMT2D and/or KMT2C, the common subunits ASH2L, RBBP5, WDR5 and DPY30, and the complex type-specific subunits PAXIP1/PTIP, PAGR1, NCOA6 and KDM6A; PAXIP1 is required for the association with the MLL2/MLL3 complex. Forms a constitutive complex with PAXIP1/PTIP independently of the MLL2/MLL3 complex. Interacts with NCOA1, ESR1, NR3C1, AR. In terms of tissue distribution, ubiquitously expressed.

It localises to the nucleus. Its association with the histone methyltransferase MLL2/MLL3 complex is suggesting a role in epigenetic transcriptional activation. However, in association with PAXIP1/PTIP is proposed to function at least in part independently of the MLL2/MLL3 complex. Proposed to be recruited by PAXIP1 to sites of DNA damage where the PAGR1:PAXIP1 complex is required for cell survival in response to DNA damage independently of the MLL2/MLL3 complex. However, its function in DNA damage has been questioned. During immunoglobulin class switching in activated B-cells is involved in transcription regulation of downstream switch regions at the immunoglobulin heavy-chain (Igh) locus independently of the MLL2/MLL3 complex. Involved in both estrogen receptor-regulated gene transcription and estrogen-stimulated G1/S cell-cycle transition. Acts as a transcriptional cofactor for nuclear hormone receptors. Inhibits the induction properties of several steroid receptors such as NR3C1, AR and PPARG; the mechanism of inhibition appears to be gene-dependent. This chain is PAXIP1-associated glutamate-rich protein 1 (PAGR1), found in Homo sapiens (Human).